A 736-amino-acid polypeptide reads, in one-letter code: Zinc finger CCCH domain-containing protein 14 (736 aa).

M1 carries the post-translational modification N-acetylmethionine. The span at 77–103 (TTEPSSLKSPDTSIFDSNVPSNKSSFS) shows a compositional bias: polar residues. A disordered region spans residues 77–153 (TTEPSSLKSP…RHSYDDGAST (77 aa)). S85 is subject to Phosphoserine. Residues K99, K139, K175, and K198 each participate in a glycyl lysine isopeptide (Lys-Gly) (interchain with G-Cter in SUMO2) cross-link. The segment covering 123–148 (RPEKRDSRVSTSSQEHKSTNVRHSYD) has biased composition (basic and acidic residues). S240 is modified (phosphoserine). Residues K245, K283, and K295 each participate in a glycyl lysine isopeptide (Lys-Gly) (interchain with G-Cter in SUMO2) cross-link. The interval 308–350 (FSHDGEEEEEDEDYGTRVGSLSSSVSVPAKPERRPSLPPSKQA) is disordered. 3 positions are modified to phosphoserine: S309, S327, and S343. K357 bears the N6-acetyllysine; alternate mark. A Glycyl lysine isopeptide (Lys-Gly) (interchain with G-Cter in SUMO2); alternate cross-link involves residue K357. The span at 367–380 (TKTTNYPAVPQKQT) shows a compositional bias: polar residues. Positions 367–386 (TKTTNYPAVPQKQTLPVAPR) are disordered. A Glycyl lysine isopeptide (Lys-Gly) (interchain with G-Cter in SUMO2) cross-link involves residue K378. Phosphoserine is present on residues S390 and S409. A disordered region spans residues 400-420 (QGQNRAPRISPPVKEEEAKGD). Residues K413 and K489 each participate in a glycyl lysine isopeptide (Lys-Gly) (interchain with G-Cter in SUMO2) cross-link. 4 positions are modified to phosphoserine: S498, S515, S527, and S620. 5 C3H1-type zinc fingers span residues 595 to 620 (EKLL…HPIS), 621 to 640 (PCKA…VHPN), 641 to 656 (CKYD…PFTH), 682 to 699 (CRYF…YHPK), and 701 to 719 (CRFN…HPTI).

This sequence belongs to the ZC3H14 family. As to quaternary structure, homodimer; facilitating circular RNAs (circRNAs) formation. Associates with the spliceosome. Interacts with HOOK2. Interacts with ZFC3H1 in a RNase-sensitive manner.

The protein resides in the nucleus speckle. In terms of biological role, RNA-binding protein involved in the biogenesis of circular RNAs (circRNAs), which are produced by back-splicing circularization of pre-mRNAs. Acts by binding to both exon-intron boundary and 3'-UTR of pre-mRNAs to promote circRNA biogenesis through dimerization and the association with the spliceosome. Required for spermatogenesis via involvement in circRNA biogenesis. Regulates the pre-mRNA processing of ATP5MC1; preventing its degradation. Also binds the poly(A) tail of mRNAs; controlling poly(A) length in neuronal cells. This Rattus norvegicus (Rat) protein is Zinc finger CCCH domain-containing protein 14.